Reading from the N-terminus, the 272-residue chain is Shikimate dehydrogenase (NADP(+)) (272 aa).

Shikimate is bound by residues Ser-14–Ser-16 and Thr-61. Lys-65 functions as the Proton acceptor in the catalytic mechanism. Asp-102 lines the shikimate pocket. NADP(+) is bound by residues Gly-127–Ala-131, Asn-151–Lys-156, and Leu-215. Residue Tyr-217 coordinates shikimate. Gly-239 lines the NADP(+) pocket.

The protein belongs to the shikimate dehydrogenase family. In terms of assembly, homodimer.

It catalyses the reaction shikimate + NADP(+) = 3-dehydroshikimate + NADPH + H(+). It functions in the pathway metabolic intermediate biosynthesis; chorismate biosynthesis; chorismate from D-erythrose 4-phosphate and phosphoenolpyruvate: step 4/7. In terms of biological role, involved in the biosynthesis of the chorismate, which leads to the biosynthesis of aromatic amino acids. Catalyzes the reversible NADPH linked reduction of 3-dehydroshikimate (DHSA) to yield shikimate (SA). This Coxiella burnetii (strain CbuK_Q154) (Coxiella burnetii (strain Q154)) protein is Shikimate dehydrogenase (NADP(+)).